Consider the following 339-residue polypeptide: Pleckstrin homology domain protein opy1 (339 aa).

The PH 1 domain maps to 25–119 (RVLKSGWLIK…WVHVLRSTTG (95 aa)). Residues 141 to 167 (ESEPNVQISDTDFDNISTEPRNQTTSP) are compositionally biased toward polar residues. The tract at residues 141–170 (ESEPNVQISDTDFDNISTEPRNQTTSPLDL) is disordered. The PH 2 domain maps to 233–330 (KVLMQGTIHW…WVAALKTSID (98 aa)).

Interacts (via domain PH 1) with phosphatidylinositol 4-phosphate 5-kinase its3; the interaction is direct but opy1 does not appear to regulate its3 localization or function.

It is found in the cell tip. Its subcellular location is the cell membrane. Its function is as follows. Binds phosphatidylinositol 4,5-bisphosphate (PtdIns(4,5)P2/PIP2) at the cell membrane. In Schizosaccharomyces pombe (strain 972 / ATCC 24843) (Fission yeast), this protein is Pleckstrin homology domain protein opy1.